The sequence spans 640 residues: Chaperone protein HtpG (640 aa).

An a; substrate-binding region spans residues Met1–Arg348. Residues Glu349 to Lys565 form a b region. Residues Leu566 to Lys640 are c.

It belongs to the heat shock protein 90 family. In terms of assembly, homodimer.

The protein localises to the cytoplasm. Molecular chaperone. Has ATPase activity. The chain is Chaperone protein HtpG from Pseudoalteromonas atlantica (strain T6c / ATCC BAA-1087).